The sequence spans 339 residues: Undifferentiated embryonic cell transcription factor 1 (339 aa).

Disordered regions lie at residues 1 to 62 (MLLR…QRTP) and 144 to 270 (MGLL…QVAP). Ser15, Ser18, Ser48, and Ser54 each carry phosphoserine. The span at 154–170 (RVRRRSTGPGRPQRRGR) shows a compositional bias: basic residues. 2 stretches are compositionally biased toward low complexity: residues 171-193 (SSLSALAPAPAPVEQEAELPLAA) and 218-229 (TSSPPLTSTDTL). Polar residues predominate over residues 261 to 270 (GRASSPQVAP). The segment at 279-310 (QTLTHLGDISTVLGPLRDQLSTLNQHVEHLRG) is leucine-zipper.

As to quaternary structure, binds to the N-terminal region of ATF2. Associates with the TFIID complex through interaction with TBP. In terms of processing, phosphorylated. As to expression, expressed mainly in pluripotent cells with expression rapidly down-regulated upon cell differentiation.

It localises to the nucleus. Its function is as follows. Acts as a transcriptional coactivator of ATF2. In Mus musculus (Mouse), this protein is Undifferentiated embryonic cell transcription factor 1.